The chain runs to 228 residues: Lipoprotein-releasing system ATP-binding protein LolD (228 aa).

The ABC transporter domain maps to 9-228 (LEAHDIQKNF…ELINGCLYRR (220 aa)). Residue 44–51 (GRSGEGKS) participates in ATP binding.

Belongs to the ABC transporter superfamily. Lipoprotein translocase (TC 3.A.1.125) family. As to quaternary structure, the complex is composed of two ATP-binding proteins (LolD) and two transmembrane proteins (LolC and LolE).

It is found in the cell inner membrane. Functionally, part of the ABC transporter complex LolCDE involved in the translocation of mature outer membrane-directed lipoproteins, from the inner membrane to the periplasmic chaperone, LolA. Responsible for the formation of the LolA-lipoprotein complex in an ATP-dependent manner. This chain is Lipoprotein-releasing system ATP-binding protein LolD, found in Protochlamydia amoebophila (strain UWE25).